The following is a 127-amino-acid chain: Transcription initiation factor IIA subunit 2 (127 aa).

Belongs to the TFIIA subunit 2 family. In terms of assembly, TFIIA is a heterodimer composed of the large TOA1 and the small TOA2 subunits.

The protein localises to the nucleus. Functionally, TFIIA is a component of the transcription machinery of RNA polymerase II and plays an important role in transcriptional activation. TFIIA in a complex with tbp mediates transcriptional activity. The protein is Transcription initiation factor IIA subunit 2 (TOA2) of Cryptococcus neoformans var. neoformans serotype D (strain B-3501A) (Filobasidiella neoformans).